Here is a 129-residue protein sequence, read N- to C-terminus: Trefoil factor 2 (129 aa).

An N-terminal signal peptide occupies residues 1 to 23; sequence MGPRGAPLLAVVLVLGLHALVEG. P-type domains lie at 29 to 73 and 79 to 122; these read CRCS…FHPL and EQCV…FFPQ. Disulfide bonds link C29–C127, C31–C58, C42–C57, C52–C69, C81–C107, C91–C106, and C101–C118.

Stomach and pancreas.

It is found in the secreted. Functionally, inhibits gastrointestinal motility and gastric acid secretion. Could function as a structural component of gastric mucus, possibly by stabilizing glycoproteins in the mucus gel through interactions with carbohydrate side chains. The sequence is that of Trefoil factor 2 (Tff2) from Mus musculus (Mouse).